Reading from the N-terminus, the 293-residue chain is Short-chain dehydrogenase/reductase PhomF' (293 aa).

NADP(+) contacts are provided by I31 and N102. The active-site Proton donor is S175. Y190, K194, and S225 together coordinate NADP(+). Y190 acts as the Proton acceptor in catalysis. Residue K194 is the Lowers pKa of active site Tyr of the active site.

This sequence belongs to the short-chain dehydrogenases/reductases (SDR) family.

Its function is as follows. Short-chain dehydrogenase/reductase; part of the gene cluster that mediates the biosynthesis of the phomopsins, a group of hexapeptide mycotoxins which infects lupins and causes lupinosis disease in livestock. The role of phomF' within the phomopsins biosynthesis pathway has still to be determined. The pathway starts with the processing of the precursor phomA by several endopeptidases including kexin proteases as well as the cluster-specific S41 family peptidase phomP1 and the oligopeptidase phomG to produce 10 identical copies of the hexapeptide Tyr-Val-Ile-Pro-Ile-Asp. After being excised from the precursor peptide, the core peptides are cyclized and modified post-translationally by enzymes encoded within the gene cluster. The timing and order of proteolysis of the phomA precursor and PTMs are still unknown. Two tyrosinase-like enzymes, phomQ1 and phomQ2, catalyze the chlorination and hydroxylation of Tyr, respectively. PhomYb, is proposed to be involved in the construction of the macrocyclic structure. The other 4 ustYa family proteins may be involved in PTMs that generate the unique structure of phomopsin A. PhomYa is required for the hydroxylation of C-beta of Tyr. PhomYc, phomYd, and phomYe are responsible for the biosynthesis of 2,3-dehydroisoleucine (dIle), 2,3-dehydroaspartic acid (dAsp), and 3,4-dehydroproline (dPro), respectively. While dIle formation by phomYc is indispensable for the installation of dAsp by phomYd, the order of the other PTMs have not been elucidated yet. Most of the biosynthetic enzymes likely have broad substrate specificity, and thus, there might be a metabolic grid from a precursor to phomopsin A. The enzyme(s) responsible for the biosynthesis of 3,4-dehydrovaline (dVal) have also not been identified yet. Finally, phomM acts as an S-adenosylmethionine-dependent alpha-N-methyltransferase that catalyzes two successive N-methylation reactions, converting N-desmethyl-phomopsin A to phomopsin A and phomopsin A further to an N,N-dimethylated congener called phomopsin E. This Diaporthe leptostromiformis (Lupinosis disease fungus) protein is Short-chain dehydrogenase/reductase PhomF'.